We begin with the raw amino-acid sequence, 329 residues long: Synaptonemal complex central element protein 1 (329 aa).

The tract at residues 1–29 (MATRPQPLGMEPEGSADLLHGPEGARGQY) is disordered. Coiled-coil stretches lie at residues 54–167 (RIEV…LETL) and 194–294 (KEQL…ILAH). A disordered region spans residues 291–329 (ILAHSTQNEEDSSWRMASPKPVEVHEETAQDQERPSSRT). Residues 312–329 (VEVHEETAQDQERPSSRT) are compositionally biased toward basic and acidic residues.

Belongs to the SYCE family. As to quaternary structure, homodimer. Found in a complex with SYCP1 and SYCE2. Interacts with SYCP1, SYCE2 and SYCE3. Interacts with SIX6OS1. In terms of tissue distribution, meiotic cells (at protein level). Expressed in the ovary and testis.

The protein resides in the nucleus. The protein localises to the chromosome. Its function is as follows. Major component of the transverse central element of synaptonemal complexes (SCS), formed between homologous chromosomes during meiotic prophase. Requires SYCP1 in order to be incorporated into the central element. May have a role in the synaptonemal complex assembly, stabilization and recombination. This is Synaptonemal complex central element protein 1 (Syce1) from Mus musculus (Mouse).